The sequence spans 149 residues: Small ribosomal subunit protein uS15 (149 aa).

The span at 1–14 (MGRMHTHRHGKSHS) shows a compositional bias: basic residues. Residues 1 to 20 (MGRMHTHRHGKSHSIRPATL) are disordered.

It belongs to the universal ribosomal protein uS15 family. Part of the 30S ribosomal subunit.

The polypeptide is Small ribosomal subunit protein uS15 (Nitrosopumilus maritimus (strain SCM1)).